A 218-amino-acid polypeptide reads, in one-letter code: MKFFIDTANLEQIREANALGVLDGVTTNPSLMAKEGIKGVENQHKHYIEICNIVDGDVSAEVIATNYEGMIKEGEELAALNPHIVVKVPCIEDGIKAIKYFSNKGIRTNCTLVFSAGQALLAAKAGATYVSPFVGRLDDICNDGVGLVAQIVELYQTYDYKTQVLAASIRNTLHILQCAEVGADVVTCPLSAIKGLLNHPLTDIGLEKFLADYKKVNG.

The active-site Schiff-base intermediate with substrate is lysine 87.

Belongs to the transaldolase family. Type 3B subfamily.

It is found in the cytoplasm. It carries out the reaction D-sedoheptulose 7-phosphate + D-glyceraldehyde 3-phosphate = D-erythrose 4-phosphate + beta-D-fructose 6-phosphate. It functions in the pathway carbohydrate degradation; pentose phosphate pathway; D-glyceraldehyde 3-phosphate and beta-D-fructose 6-phosphate from D-ribose 5-phosphate and D-xylulose 5-phosphate (non-oxidative stage): step 2/3. Its function is as follows. Transaldolase is important for the balance of metabolites in the pentose-phosphate pathway. The protein is Probable transaldolase of Phocaeicola vulgatus (strain ATCC 8482 / DSM 1447 / JCM 5826 / CCUG 4940 / NBRC 14291 / NCTC 11154) (Bacteroides vulgatus).